Consider the following 262-residue polypeptide: Hydroxyethylthiazole kinase (262 aa).

Met44 is a substrate binding site. ATP-binding residues include Arg118 and Thr166. Residue Gly193 coordinates substrate.

Belongs to the Thz kinase family. It depends on Mg(2+) as a cofactor.

The catalysed reaction is 5-(2-hydroxyethyl)-4-methylthiazole + ATP = 4-methyl-5-(2-phosphooxyethyl)-thiazole + ADP + H(+). Its pathway is cofactor biosynthesis; thiamine diphosphate biosynthesis; 4-methyl-5-(2-phosphoethyl)-thiazole from 5-(2-hydroxyethyl)-4-methylthiazole: step 1/1. Its function is as follows. Catalyzes the phosphorylation of the hydroxyl group of 4-methyl-5-beta-hydroxyethylthiazole (THZ). This is Hydroxyethylthiazole kinase from Chlamydia felis (strain Fe/C-56) (Chlamydophila felis).